Consider the following 921-residue polypeptide: Isoleucine--tRNA ligase (921 aa).

Residues 57–67 carry the 'HIGH' region motif; it reads PYANGDIHMGH. E552 contributes to the L-isoleucyl-5'-AMP binding site. The 'KMSKS' region signature appears at 593–597; it reads KMSKS. An ATP-binding site is contributed by K596. Residues C888, C891, C908, and C911 each contribute to the Zn(2+) site.

It belongs to the class-I aminoacyl-tRNA synthetase family. IleS type 1 subfamily. As to quaternary structure, monomer. Zn(2+) serves as cofactor.

The protein resides in the cytoplasm. It carries out the reaction tRNA(Ile) + L-isoleucine + ATP = L-isoleucyl-tRNA(Ile) + AMP + diphosphate. Functionally, catalyzes the attachment of isoleucine to tRNA(Ile). As IleRS can inadvertently accommodate and process structurally similar amino acids such as valine, to avoid such errors it has two additional distinct tRNA(Ile)-dependent editing activities. One activity is designated as 'pretransfer' editing and involves the hydrolysis of activated Val-AMP. The other activity is designated 'posttransfer' editing and involves deacylation of mischarged Val-tRNA(Ile). The chain is Isoleucine--tRNA ligase from Bacillus cereus (strain AH820).